A 371-amino-acid polypeptide reads, in one-letter code: Maltose/maltodextrin import ATP-binding protein MalK (371 aa).

One can recognise an ABC transporter domain in the interval 4-234 (VQLQNVTKAW…PADRFVAGFI (231 aa)). 36 to 43 (GPSGCGKS) contributes to the ATP binding site.

This sequence belongs to the ABC transporter superfamily. Maltooligosaccharide importer (TC 3.A.1.1.1) family. In terms of assembly, the complex is composed of two ATP-binding proteins (MalK), two transmembrane proteins (MalG and MalK) and a solute-binding protein (MalE).

It localises to the cell inner membrane. It carries out the reaction D-maltose(out) + ATP + H2O = D-maltose(in) + ADP + phosphate + H(+). Functionally, part of the ABC transporter complex MalEFGK involved in maltose/maltodextrin import. Responsible for energy coupling to the transport system. The polypeptide is Maltose/maltodextrin import ATP-binding protein MalK (Escherichia coli O157:H7).